A 370-amino-acid polypeptide reads, in one-letter code: 3-dehydroquinate synthase (370 aa).

NAD(+)-binding positions include 107 to 111 (GVIGD), 131 to 132 (TS), Lys-144, and Lys-153. Residues Glu-186, His-249, and His-267 each contribute to the Zn(2+) site.

This sequence belongs to the sugar phosphate cyclases superfamily. Dehydroquinate synthase family. Co(2+) serves as cofactor. The cofactor is Zn(2+). NAD(+) is required as a cofactor.

The protein localises to the cytoplasm. The catalysed reaction is 7-phospho-2-dehydro-3-deoxy-D-arabino-heptonate = 3-dehydroquinate + phosphate. It functions in the pathway metabolic intermediate biosynthesis; chorismate biosynthesis; chorismate from D-erythrose 4-phosphate and phosphoenolpyruvate: step 2/7. In terms of biological role, catalyzes the conversion of 3-deoxy-D-arabino-heptulosonate 7-phosphate (DAHP) to dehydroquinate (DHQ). This chain is 3-dehydroquinate synthase, found in Ruegeria pomeroyi (strain ATCC 700808 / DSM 15171 / DSS-3) (Silicibacter pomeroyi).